Consider the following 582-residue polypeptide: Dihydroxy-acid dehydratase 3 (582 aa).

Cysteine 67 contributes to the [2Fe-2S] cluster binding site. Aspartate 99 lines the Mg(2+) pocket. Cysteine 140 provides a ligand contact to [2Fe-2S] cluster. Mg(2+) is bound by residues aspartate 141 and lysine 142. Position 142 is an N6-carboxylysine (lysine 142). [2Fe-2S] cluster is bound at residue cysteine 212. Residue glutamate 462 participates in Mg(2+) binding. Serine 488 functions as the Proton acceptor in the catalytic mechanism.

This sequence belongs to the IlvD/Edd family. Homodimer. Requires [2Fe-2S] cluster as cofactor. Mg(2+) is required as a cofactor.

The enzyme catalyses (2R)-2,3-dihydroxy-3-methylbutanoate = 3-methyl-2-oxobutanoate + H2O. The catalysed reaction is (2R,3R)-2,3-dihydroxy-3-methylpentanoate = (S)-3-methyl-2-oxopentanoate + H2O. It participates in amino-acid biosynthesis; L-isoleucine biosynthesis; L-isoleucine from 2-oxobutanoate: step 3/4. The protein operates within amino-acid biosynthesis; L-valine biosynthesis; L-valine from pyruvate: step 3/4. In terms of biological role, functions in the biosynthesis of branched-chain amino acids. Catalyzes the dehydration of (2R,3R)-2,3-dihydroxy-3-methylpentanoate (2,3-dihydroxy-3-methylvalerate) into 2-oxo-3-methylpentanoate (2-oxo-3-methylvalerate) and of (2R)-2,3-dihydroxy-3-methylbutanoate (2,3-dihydroxyisovalerate) into 2-oxo-3-methylbutanoate (2-oxoisovalerate), the penultimate precursor to L-isoleucine and L-valine, respectively. The sequence is that of Dihydroxy-acid dehydratase 3 from Bradyrhizobium diazoefficiens (strain JCM 10833 / BCRC 13528 / IAM 13628 / NBRC 14792 / USDA 110).